Consider the following 490-residue polypeptide: Aspartyl/glutamyl-tRNA(Asn/Gln) amidotransferase subunit B (490 aa).

Belongs to the GatB/GatE family. GatB subfamily. Heterotrimer of A, B and C subunits.

The enzyme catalyses L-glutamyl-tRNA(Gln) + L-glutamine + ATP + H2O = L-glutaminyl-tRNA(Gln) + L-glutamate + ADP + phosphate + H(+). It carries out the reaction L-aspartyl-tRNA(Asn) + L-glutamine + ATP + H2O = L-asparaginyl-tRNA(Asn) + L-glutamate + ADP + phosphate + 2 H(+). In terms of biological role, allows the formation of correctly charged Asn-tRNA(Asn) or Gln-tRNA(Gln) through the transamidation of misacylated Asp-tRNA(Asn) or Glu-tRNA(Gln) in organisms which lack either or both of asparaginyl-tRNA or glutaminyl-tRNA synthetases. The reaction takes place in the presence of glutamine and ATP through an activated phospho-Asp-tRNA(Asn) or phospho-Glu-tRNA(Gln). The chain is Aspartyl/glutamyl-tRNA(Asn/Gln) amidotransferase subunit B from Zymomonas mobilis subsp. mobilis (strain ATCC 31821 / ZM4 / CP4).